Consider the following 294-residue polypeptide: 4-hydroxy-tetrahydrodipicolinate synthase (294 aa).

Thr45 contributes to the pyruvate binding site. Tyr133 acts as the Proton donor/acceptor in catalysis. Catalysis depends on Lys161, which acts as the Schiff-base intermediate with substrate. Ile203 lines the pyruvate pocket.

This sequence belongs to the DapA family. Homotetramer; dimer of dimers.

Its subcellular location is the cytoplasm. The catalysed reaction is L-aspartate 4-semialdehyde + pyruvate = (2S,4S)-4-hydroxy-2,3,4,5-tetrahydrodipicolinate + H2O + H(+). Its pathway is amino-acid biosynthesis; L-lysine biosynthesis via DAP pathway; (S)-tetrahydrodipicolinate from L-aspartate: step 3/4. Its function is as follows. Catalyzes the condensation of (S)-aspartate-beta-semialdehyde [(S)-ASA] and pyruvate to 4-hydroxy-tetrahydrodipicolinate (HTPA). The protein is 4-hydroxy-tetrahydrodipicolinate synthase of Shewanella baltica (strain OS223).